The following is a 496-amino-acid chain: Germacrene A hydroxylase (496 aa).

Over 1-2 (ME) the chain is Cytoplasmic. The helical; Signal-anchor for type II membrane protein transmembrane segment at 3–23 (LTLTTSLGLAVFVFILFKLLT) threads the bilayer. The Lumenal portion of the chain corresponds to 24-496 (GSKSTKNSLP…TAYKTANNSA (473 aa)). Heme is bound at residue C432. N493 carries N-linked (GlcNAc...) asparagine glycosylation.

Belongs to the cytochrome P450 family. Requires heme as cofactor.

Its subcellular location is the endoplasmic reticulum membrane. The enzyme catalyses (+)-(R)-germacrene A + 3 reduced [NADPH--hemoprotein reductase] + 3 O2 = germacra-1(10),4,11(13)-trien-12-oate + 3 oxidized [NADPH--hemoprotein reductase] + 4 H2O + 4 H(+). It participates in secondary metabolite biosynthesis; terpenoid biosynthesis. In terms of biological role, involved in the biosynthesis of germacrene-derived sesquiterpene lactones. Catalyzes three consecutive oxidations of germacrene A to produce germacrene A acid. Could also catalyze the three-step oxidation of non-natural substrate amorphadiene to artemisinic acid. In Barnadesia spinosa (Spiny barnadesia), this protein is Germacrene A hydroxylase.